A 444-amino-acid polypeptide reads, in one-letter code: NAD(+)--protein-arginine ADP-ribosyltransferase Tre1 (444 aa).

Residues 72-140 (PRHVTGVLAD…NDLLACSAEI (69 aa)) are PAAR domain. Residues 266-444 (MTLAEAVGQE…TTHLLYREIP (179 aa)) form the TR mART core domain. The segment at 274-444 (QEQAKVWTQT…TTHLLYREIP (171 aa)) is ART domain. Active-site residues include Arg-356, Ser-381, and Glu-415.

This sequence belongs to the Arg-specific ADP-ribosyltransferase family. Forms a stable complex with cognate immunity protein Tri1-Sp.

It is found in the secreted. Its subcellular location is the host cytoplasm. The enzyme catalyses L-arginyl-[protein] + NAD(+) = N(omega)-(ADP-D-ribosyl)-L-arginyl-[protein] + nicotinamide + H(+). Toxic component of a contact-dependent interbacterial competition system (also called effector-immunity systems). Acts by ADP-ribosylating a number of target proteins in target cells; E.coli target proteins include FtsZ, EFTu, RNase E, Fis, RL9, SucB, and LolD. FtsZ is thought to be the physiologically relevant target as it is ADP-ribosylated on a critical residue. ADP-ribosylation of FtsZ prevents formation of the FtsZ mid-cell ring and inhibits cell division. Overexpression of the whole Tre1 protein or the ART domain in E.coli is toxic; cells elongate dramatically and some undergo lysis. Toxic activity is neutralized by coexpression of the cognate immunity protein Tri1-Sp; Tri1-Sp neutralizes this protein both by binding to and occluding the active site (via Tri1's N-terminal extension) and by hydrolysis of the ADP-ribosyl moiety from the target protein. Tre1 can also be neutralized by non-cognate immunity protein Tri1-Pp from P.putida strain GB-1, with which it does not form a stable complex; DraG of R.palustris does not neutralize the toxic effects of this protein. In interbacterial competition studies Tri1 from P.putida strain B6-2 also neutralizes this protein. The chain is NAD(+)--protein-arginine ADP-ribosyltransferase Tre1 from Serratia proteamaculans (strain 568).